A 342-amino-acid chain; its full sequence is Probable allantoicase (342 aa).

This sequence belongs to the allantoicase family.

The catalysed reaction is allantoate + H2O = (S)-ureidoglycolate + urea. It functions in the pathway nitrogen metabolism; (S)-allantoin degradation; (S)-ureidoglycolate from allantoate (aminidohydrolase route): step 1/1. Utilization of purines as secondary nitrogen sources, when primary sources are limiting. In Schizosaccharomyces pombe (strain 972 / ATCC 24843) (Fission yeast), this protein is Probable allantoicase.